Here is a 455-residue protein sequence, read N- to C-terminus: 2-succinylbenzoate--CoA ligase (455 aa).

This sequence belongs to the ATP-dependent AMP-binding enzyme family. MenE subfamily.

The enzyme catalyses 2-succinylbenzoate + ATP + CoA = 2-succinylbenzoyl-CoA + AMP + diphosphate. The protein operates within quinol/quinone metabolism; 1,4-dihydroxy-2-naphthoate biosynthesis; 1,4-dihydroxy-2-naphthoate from chorismate: step 5/7. It participates in quinol/quinone metabolism; menaquinone biosynthesis. In terms of biological role, converts 2-succinylbenzoate (OSB) to 2-succinylbenzoyl-CoA (OSB-CoA). The chain is 2-succinylbenzoate--CoA ligase from Salmonella typhimurium (strain LT2 / SGSC1412 / ATCC 700720).